A 464-amino-acid chain; its full sequence is Macrophage metalloelastase (464 aa).

The first 17 residues, 1-17, serve as a signal peptide directing secretion; it reads MKFLLLILTLWVTSSGA. Positions 18-100 are cleaved as a propeptide — activation peptide; the sequence is DPLKENDMLF…DVYHFKTMPG (83 aa). Asn69 is a glycosylation site (N-linked (GlcNAc...) asparagine). The short motif at 85 to 92 is the Cysteine switch element; it reads PRCGVPDV. A Zn(2+)-binding site is contributed by Cys87. Residues Asp119 and Asp153 each contribute to the Ca(2+) site. His163 and Asp165 together coordinate Zn(2+). Positions 170, 171, 173, and 175 each coordinate Ca(2+). A Zn(2+)-binding site is contributed by His178. Ca(2+) contacts are provided by Gly185, Gly187, and Asp189. His191 serves as a coordination point for Zn(2+). Residues Asp193, Glu194, and Glu196 each contribute to the Ca(2+) site. His213 contributes to the Zn(2+) binding site. Glu214 is an active-site residue. Zn(2+)-binding residues include His217 and His223. 4 Hemopexin repeats span residues 274–323, 324–370, 372–420, and 421–464; these read PTAC…WPTL, PSGI…GFPD, VKKI…FPGI, and GPKI…WFDC. An intrachain disulfide couples Cys277 to Cys464. Ca(2+) is bound by residues Asp284, Glu328, Asp376, and Asp425.

The protein belongs to the peptidase M10A family. The cofactor is Ca(2+). Zn(2+) is required as a cofactor.

The protein resides in the secreted. The protein localises to the extracellular space. It is found in the extracellular matrix. It carries out the reaction Hydrolysis of soluble and insoluble elastin. Specific cleavages are also produced at 14-Ala-|-Leu-15 and 16-Tyr-|-Leu-17 in the B chain of insulin.. In terms of biological role, may be involved in tissue injury and remodeling. Has significant elastolytic activity. Can accept large and small amino acids at the P1' site, but has a preference for leucine. Aromatic or hydrophobic residues are preferred at the P1 site, with small hydrophobic residues (preferably alanine) occupying P3. The protein is Macrophage metalloelastase (MMP12) of Oryctolagus cuniculus (Rabbit).